The sequence spans 205 residues: High frequency lysogenization protein HflD homolog (205 aa).

This sequence belongs to the HflD family.

It localises to the cytoplasm. The protein resides in the cell inner membrane. The polypeptide is High frequency lysogenization protein HflD homolog (Hahella chejuensis (strain KCTC 2396)).